A 172-amino-acid polypeptide reads, in one-letter code: ATP synthase subunit b (172 aa).

Residues I17 to P37 form a helical membrane-spanning segment.

This sequence belongs to the ATPase B chain family. F-type ATPases have 2 components, F(1) - the catalytic core - and F(0) - the membrane proton channel. F(1) has five subunits: alpha(3), beta(3), gamma(1), delta(1), epsilon(1). F(0) has three main subunits: a(1), b(2) and c(10-14). The alpha and beta chains form an alternating ring which encloses part of the gamma chain. F(1) is attached to F(0) by a central stalk formed by the gamma and epsilon chains, while a peripheral stalk is formed by the delta and b chains.

It localises to the cell membrane. In terms of biological role, f(1)F(0) ATP synthase produces ATP from ADP in the presence of a proton or sodium gradient. F-type ATPases consist of two structural domains, F(1) containing the extramembraneous catalytic core and F(0) containing the membrane proton channel, linked together by a central stalk and a peripheral stalk. During catalysis, ATP synthesis in the catalytic domain of F(1) is coupled via a rotary mechanism of the central stalk subunits to proton translocation. Component of the F(0) channel, it forms part of the peripheral stalk, linking F(1) to F(0). The sequence is that of ATP synthase subunit b from Tropheryma whipplei (strain TW08/27) (Whipple's bacillus).